The primary structure comprises 388 residues: Quinolone resistance protein NorA (388 aa).

12 consecutive transmembrane segments (helical) span residues 5-25 (IFVLYFNIFLIFLGIGLVIPV), 42-62 (LLVAAFALSQMIISPFGGTLA), 69-89 (LIICIGLILFSVSEFMFAVGH), 99-119 (VIGGMSAGMVMPGVTGLIADI), 129-149 (FGYMSAIINSGFILGPGIGGF), 157-177 (MPFYFAGALGILAFIMSIVLI), 201-221 (WKVFITPVILTLVLSFGLSAF), 239-259 (DISIAITGGGIFGALFQIYFF), 269-289 (LTFIAWSLLYSVVVLILLVFA), 293-313 (WSIMLISFVVFIGFDMIRPAI), 331-351 (LNSTFTSMGNFIGPLIAGALF), and 355-375 (IEAPIYMAIGVSLAGVVIVLI).

Belongs to the major facilitator superfamily. TCR/Tet family.

The protein localises to the cell membrane. Its function is as follows. Involved in quinolone resistance. May constitute a membrane-associated active efflux pump of hydrophilic quinolones. The polypeptide is Quinolone resistance protein NorA (norA) (Staphylococcus aureus (strain Mu50 / ATCC 700699)).